The following is a 265-amino-acid chain: Ribosomal RNA small subunit methyltransferase A (265 aa).

S-adenosyl-L-methionine-binding residues include N13, L15, G39, E59, D87, and N108.

Belongs to the class I-like SAM-binding methyltransferase superfamily. rRNA adenine N(6)-methyltransferase family. RsmA subfamily.

Its subcellular location is the cytoplasm. It catalyses the reaction adenosine(1518)/adenosine(1519) in 16S rRNA + 4 S-adenosyl-L-methionine = N(6)-dimethyladenosine(1518)/N(6)-dimethyladenosine(1519) in 16S rRNA + 4 S-adenosyl-L-homocysteine + 4 H(+). Its function is as follows. Specifically dimethylates two adjacent adenosines (A1518 and A1519) in the loop of a conserved hairpin near the 3'-end of 16S rRNA in the 30S particle. May play a critical role in biogenesis of 30S subunits. The protein is Ribosomal RNA small subunit methyltransferase A of Aliarcobacter butzleri (strain RM4018) (Arcobacter butzleri).